The chain runs to 526 residues: Type 2 glycosyltransferase (526 aa).

A helical membrane pass occupies residues 25–45 (PSFDFWYSSTFWLYLFLGLWF). Residues N298 and N317 are each glycosylated (N-linked (GlcNAc...) asparagine). A run of 3 helical transmembrane segments spans residues 340 to 360 (FATF…SCWW), 375 to 395 (WSQF…GLFI), and 403 to 423 (FLPV…YALI). N-linked (GlcNAc...) asparagine glycosylation is found at N426 and N517.

The protein belongs to the GT2 glycosyltransferase family.

It localises to the cell membrane. Its subcellular location is the secreted. The protein resides in the cell wall. Glycosyltransferase involved in the maintenance of the outermost surface of the fungal cell wall. Likely functions in the synthesis of a currently unknown, potentially minor but widespread, extracellular or outer cell wall polysaccharide which plays a key role in facilitating many interactions between plants and fungi by enabling hyphal growth on solid matrices. This Gibberella zeae (strain ATCC MYA-4620 / CBS 123657 / FGSC 9075 / NRRL 31084 / PH-1) (Wheat head blight fungus) protein is Type 2 glycosyltransferase.